The primary structure comprises 135 residues: uncharacterized protein (135 aa).

Positions 8–123 (PKGKMVLRTL…IFVYVAVDEF (116 aa)) constitute a HotDog ACOT-type domain.

It belongs to the acyl coenzyme A hydrolase family.

This is an uncharacterized protein from Buchnera aphidicola subsp. Baizongia pistaciae (strain Bp).